The chain runs to 159 residues: Ribosomal RNA large subunit methyltransferase H (159 aa).

S-adenosyl-L-methionine-binding positions include Leu76, Gly108, and 127-132; that span reads FSKMTF.

This sequence belongs to the RNA methyltransferase RlmH family. In terms of assembly, homodimer.

The protein localises to the cytoplasm. The enzyme catalyses pseudouridine(1915) in 23S rRNA + S-adenosyl-L-methionine = N(3)-methylpseudouridine(1915) in 23S rRNA + S-adenosyl-L-homocysteine + H(+). In terms of biological role, specifically methylates the pseudouridine at position 1915 (m3Psi1915) in 23S rRNA. The sequence is that of Ribosomal RNA large subunit methyltransferase H from Bacillus subtilis (strain 168).